A 457-amino-acid chain; its full sequence is Siroheme synthase (457 aa).

The segment at 1-204 (MDHLPIFCQL…ADEKAVNATT (204 aa)) is precorrin-2 dehydrogenase /sirohydrochlorin ferrochelatase. Residues 22 to 23 (DV) and 43 to 44 (LT) contribute to the NAD(+) site. Ser128 bears the Phosphoserine mark. The uroporphyrinogen-III C-methyltransferase stretch occupies residues 216–457 (GEVVLVGAGP…RDKLNWFSSH (242 aa)). Pro225 provides a ligand contact to S-adenosyl-L-methionine. Asp248 functions as the Proton acceptor in the catalytic mechanism. The active-site Proton donor is the Lys270. S-adenosyl-L-methionine contacts are provided by residues 301–303 (GGD), Ile306, 331–332 (TA), Met382, and Gly411.

The protein in the N-terminal section; belongs to the precorrin-2 dehydrogenase / sirohydrochlorin ferrochelatase family. It in the C-terminal section; belongs to the precorrin methyltransferase family.

The enzyme catalyses uroporphyrinogen III + 2 S-adenosyl-L-methionine = precorrin-2 + 2 S-adenosyl-L-homocysteine + H(+). The catalysed reaction is precorrin-2 + NAD(+) = sirohydrochlorin + NADH + 2 H(+). It carries out the reaction siroheme + 2 H(+) = sirohydrochlorin + Fe(2+). Its pathway is cofactor biosynthesis; adenosylcobalamin biosynthesis; precorrin-2 from uroporphyrinogen III: step 1/1. It participates in cofactor biosynthesis; adenosylcobalamin biosynthesis; sirohydrochlorin from precorrin-2: step 1/1. The protein operates within porphyrin-containing compound metabolism; siroheme biosynthesis; precorrin-2 from uroporphyrinogen III: step 1/1. It functions in the pathway porphyrin-containing compound metabolism; siroheme biosynthesis; siroheme from sirohydrochlorin: step 1/1. Its pathway is porphyrin-containing compound metabolism; siroheme biosynthesis; sirohydrochlorin from precorrin-2: step 1/1. Its function is as follows. Multifunctional enzyme that catalyzes the SAM-dependent methylations of uroporphyrinogen III at position C-2 and C-7 to form precorrin-2 via precorrin-1. Then it catalyzes the NAD-dependent ring dehydrogenation of precorrin-2 to yield sirohydrochlorin. Finally, it catalyzes the ferrochelation of sirohydrochlorin to yield siroheme. This is Siroheme synthase from Salmonella arizonae (strain ATCC BAA-731 / CDC346-86 / RSK2980).